The following is a 389-amino-acid chain: S-adenosylmethionine synthase (389 aa).

ATP is bound at residue His-17. Asp-19 contacts Mg(2+). Glu-45 contributes to the K(+) binding site. The L-methionine site is built by Glu-58 and Gln-101. A flexible loop region spans residues 101–111 (QSPDIAQGVNP). Residues 168–170 (DGK), 234–235 (RF), Asp-243, 249–250 (RK), and Lys-270 each bind ATP. An L-methionine-binding site is contributed by Asp-243. Residue Lys-274 coordinates L-methionine.

It belongs to the AdoMet synthase family. In terms of assembly, homotetramer; dimer of dimers. It depends on Mg(2+) as a cofactor. Requires K(+) as cofactor.

Its subcellular location is the cytoplasm. The catalysed reaction is L-methionine + ATP + H2O = S-adenosyl-L-methionine + phosphate + diphosphate. The protein operates within amino-acid biosynthesis; S-adenosyl-L-methionine biosynthesis; S-adenosyl-L-methionine from L-methionine: step 1/1. Functionally, catalyzes the formation of S-adenosylmethionine (AdoMet) from methionine and ATP. The overall synthetic reaction is composed of two sequential steps, AdoMet formation and the subsequent tripolyphosphate hydrolysis which occurs prior to release of AdoMet from the enzyme. The protein is S-adenosylmethionine synthase of Syntrophobacter fumaroxidans (strain DSM 10017 / MPOB).